The chain runs to 468 residues: UDP-N-acetylmuramate--L-alanine ligase (468 aa).

114 to 120 (GTHGKTT) contacts ATP.

This sequence belongs to the MurCDEF family.

It is found in the cytoplasm. It carries out the reaction UDP-N-acetyl-alpha-D-muramate + L-alanine + ATP = UDP-N-acetyl-alpha-D-muramoyl-L-alanine + ADP + phosphate + H(+). It participates in cell wall biogenesis; peptidoglycan biosynthesis. Its function is as follows. Cell wall formation. This is UDP-N-acetylmuramate--L-alanine ligase from Rhodopseudomonas palustris (strain HaA2).